A 169-amino-acid polypeptide reads, in one-letter code: Peptide deformylase (169 aa).

Cys-91 and His-133 together coordinate Fe cation. Residue Glu-134 is part of the active site. Position 137 (His-137) interacts with Fe cation.

Belongs to the polypeptide deformylase family. Fe(2+) is required as a cofactor.

The enzyme catalyses N-terminal N-formyl-L-methionyl-[peptide] + H2O = N-terminal L-methionyl-[peptide] + formate. Functionally, removes the formyl group from the N-terminal Met of newly synthesized proteins. Requires at least a dipeptide for an efficient rate of reaction. N-terminal L-methionine is a prerequisite for activity but the enzyme has broad specificity at other positions. In Salmonella typhi, this protein is Peptide deformylase.